Consider the following 1201-residue polypeptide: uncharacterized protein (1201 aa).

A helical membrane pass occupies residues 140–160 (IIINLIFFFAFIIVGIYLFKP). Coiled-coil stretches lie at residues 420–459 (QKKQ…AELN) and 536–574 (AIKA…ITKM).

It is found in the cell membrane. This is an uncharacterized protein from Bacillus subtilis (strain 168).